The following is a 466-amino-acid chain: Xanthine permease XanQ (466 aa).

Residues 1–44 lie on the Cytoplasmic side of the membrane; it reads MSDINHAGSDLIFELEDRPPFHQALVGAITHLLAIFVPMVTPAL. Residues 45-65 form a helical membrane-spanning segment; sequence IVGAALQLSAETTAYLVSMAM. At 66–74 the chain is on the periplasmic side; it reads IASGIGTWL. Residues 75-95 form a helical membrane-spanning segment; sequence QVNRYGIVGSGLLSIQSVNFS. Over 96–99 the chain is Cytoplasmic; it reads FVTV. Residues 100–120 traverse the membrane as a helical segment; that stretch reads MIALGSSMKSDGFHEELIMSS. Residues 121 to 139 lie on the Periplasmic side of the membrane; the sequence is LLGVSFVGAFLVVGSSFIL. A helical membrane pass occupies residues 140–160; that stretch reads PYLRRVITPTVSGIVVLMIGL. At 161-170 the chain is on the cytoplasmic side; the sequence is SLIKVGIIDF. A helical membrane pass occupies residues 171–191; the sequence is GGGFAAKSSGTFGNYEHLGVG. The Periplasmic segment spans residues 192-199; that stretch reads LLVLIVVI. A helical transmembrane segment spans residues 200-220; sequence GFNCCRSPLLRMGGIAIGLCV. The Cytoplasmic segment spans residues 221-229; that stretch reads GYIASLCLG. Residues 230–250 traverse the membrane as a helical segment; the sequence is MVDFSSMRNLPLITIPHPFKY. Over 251 to 277 the chain is Periplasmic; that stretch reads GFSFSFHQFLVVGTIYLLSVLEAVGDI. A helical membrane pass occupies residues 278–298; it reads TATAMVSRRPIQGEEYQSRLK. At 299–317 the chain is on the cytoplasmic side; sequence GGVLADGLVSVIASAVGSL. A helical transmembrane segment spans residues 318–338; sequence PLTTFAQNNGVIQMTGVASRY. Residues 339 to 361 lie on the Periplasmic side of the membrane; it reads VGRTIAVMLVILGLFPMIGGFFT. The chain crosses the membrane as a helical span at residues 362-382; that stretch reads TIPSAVLGGAMTLMFSMIAIA. Gly-383 is a topological domain (cytoplasmic). The chain crosses the membrane as a helical span at residues 384-403; sequence IRIIITNGLKRRETLIVATS. Residues 404 to 444 are Periplasmic-facing; that stretch reads LGLGLGVSYDPEIFKILPASIYVLVENPICAGGLTAILLNI. A helical membrane pass occupies residues 445-465; the sequence is ILPGGYRQENVLPGITSAEEM. Residue Asp-466 is a topological domain, cytoplasmic.

Belongs to the nucleobase:cation symporter-2 (NCS2) (TC 2.A.40) family.

It localises to the cell inner membrane. It carries out the reaction xanthine(in) + H(+)(in) = xanthine(out) + H(+)(out). Specific, proton motive force-dependent high-affinity transporter for xanthine. This chain is Xanthine permease XanQ (xanQ), found in Escherichia coli O157:H7.